We begin with the raw amino-acid sequence, 223 residues long: Uracil-DNA glycosylase (223 aa).

Asp-67 acts as the Proton acceptor in catalysis.

It belongs to the uracil-DNA glycosylase (UDG) superfamily. UNG family.

Its subcellular location is the cytoplasm. The catalysed reaction is Hydrolyzes single-stranded DNA or mismatched double-stranded DNA and polynucleotides, releasing free uracil.. In terms of biological role, excises uracil residues from the DNA which can arise as a result of misincorporation of dUMP residues by DNA polymerase or due to deamination of cytosine. The sequence is that of Uracil-DNA glycosylase from Borreliella burgdorferi (strain ZS7) (Borrelia burgdorferi).